Consider the following 362-residue polypeptide: Large ribosomal subunit protein uL3 (362 aa).

The segment at 340–362 (RPPKKKPPVQRPQITYVSVESKQ) is disordered. Residues 351–362 (PQITYVSVESKQ) show a composition bias toward polar residues.

It belongs to the universal ribosomal protein uL3 family. In terms of assembly, part of the 50S ribosomal subunit. Forms a cluster with proteins L14 and L24e.

In terms of biological role, one of the primary rRNA binding proteins, it binds directly near the 3'-end of the 23S rRNA, where it nucleates assembly of the 50S subunit. The polypeptide is Large ribosomal subunit protein uL3 (Pyrococcus horikoshii (strain ATCC 700860 / DSM 12428 / JCM 9974 / NBRC 100139 / OT-3)).